A 328-amino-acid chain; its full sequence is Cell cycle control protein 50A (328 aa).

Residues 1–28 (MAMNYSAKDEVDGGPTGPPGGAAKTRRP) form a disordered region. Ala-2 is subject to N-acetylalanine. The tract at residues 2–48 (AMNYSAKDEVDGGPTGPPGGAAKTRRPDNTAFKQQRLPAWQPILTAG) is required for ATPase and aminophospholipid flippase activity. At 2–49 (AMNYSAKDEVDGGPTGPPGGAAKTRRPDNTAFKQQRLPAWQPILTAGT) the chain is on the cytoplasmic side. An interaction with ATP8A2 region spans residues 49 to 315 (TVLPTFFIIG…LGVVLLVINH (267 aa)). A helical transmembrane segment spans residues 50 to 70 (VLPTFFIIGLIFIPIGIGIFV). Residues 71–292 (TSNNIREIEG…SWMGGKNPFL (222 aa)) lie on the Exoplasmic loop side of the membrane. Positions 102–125 (RDDSQLNGDPSALLNPSKECEPYR) are disordered. Cys-121 and Cys-135 are oxidised to a cystine. N-linked (GlcNAc...) asparagine glycosylation is found at Asn-144 and Asn-261. Residues 293 to 313 (GIAYITIGSISFLLGVVLLVI) form a helical membrane-spanning segment. Residues 314–328 (NHKYRNSSNTADITI) are Cytoplasmic-facing.

The protein belongs to the CDC50/LEM3 family. Component of various P4-ATPase flippase complexes which consists of a catalytic alpha subunit and an accessory beta subunit. Interacts with ATP8A1 to form a flippase complex; this complex forms an intermediate phosphoenzyme. Interacts with ATP8A2 to form a flippase complex. TP8B1:TMEM30A and ATP8B2:TMEM30A flippase complexes have been shown to form intermediate phosphoenzymes in vitro. Interacts with alpha subunits ATP8A1, ATP8B1, ATP8B2, ATP8B4, ATP10A, ATP10B, ATP10D, ATP11A, ATP11B and ATP11C. Post-translationally, N-glycosylated. Contains high mannose-type oligosaccharides.

The protein resides in the membrane. The protein localises to the golgi apparatus. It localises to the cytoplasmic vesicle. Its subcellular location is the secretory vesicle membrane. It is found in the apical cell membrane. The protein resides in the photoreceptor inner segment. The protein localises to the cell projection. It localises to the cilium. Its subcellular location is the photoreceptor outer segment. Functionally, accessory component of a P4-ATPase flippase complex which catalyzes the hydrolysis of ATP coupled to the transport of aminophospholipids from the outer to the inner leaflet of various membranes and ensures the maintenance of asymmetric distribution of phospholipids. Phospholipid translocation also seems to be implicated in vesicle formation and in uptake of lipid signaling molecules. The beta subunit may assist in binding of the phospholipid substrate. Required for the proper folding, assembly and ER to Golgi exit of the ATP8A2:TMEM30A flippase complex. ATP8A2:TMEM30A may be involved in regulation of neurite outgrowth, and, reconstituted to liposomes, predomiminantly transports phosphatidylserine (PS) and to a lesser extent phosphatidylethanolamine (PE). The ATP8A1:TMEM30A flippase complex seems to play a role in regulation of cell migration probably involving flippase-mediated translocation of phosphatidylethanolamine (PE) at the plasma membrane. Required for the formation of the ATP8A2, ATP8B1 and ATP8B2 P-type ATPAse intermediate phosphoenzymes. Involved in uptake of platelet-activating factor (PAF). Can also mediate the export of alpha subunits ATP8A1, ATP8B1, ATP8B2, ATP8B4, ATP10A, ATP10B, ATP10D, ATP11A, ATP11B and ATP11C from ER to other membrane localizations. The protein is Cell cycle control protein 50A of Rattus norvegicus (Rat).